Consider the following 142-residue polypeptide: Probable pilin MJ0832.1 (142 aa).

A propeptide spanning residues 1–8 is cleaved from the precursor; it reads MLKFRKRG. Positions 9–17 match the QXSXEXXXL motif; that stretch reads QISLEFSLL.

The N-terminus is cleaved by the prepilin peptidase EppA, which recognizes the class III signal sequence.

Its subcellular location is the secreted. It is found in the cell surface. It localises to the fimbrium. The chain is Probable pilin MJ0832.1 from Methanocaldococcus jannaschii (strain ATCC 43067 / DSM 2661 / JAL-1 / JCM 10045 / NBRC 100440) (Methanococcus jannaschii).